Here is a 223-residue protein sequence, read N- to C-terminus: uncharacterized protein (223 aa).

To M.jannaschii MJ0575.

This is an uncharacterized protein from Methanocaldococcus jannaschii (strain ATCC 43067 / DSM 2661 / JAL-1 / JCM 10045 / NBRC 100440) (Methanococcus jannaschii).